Reading from the N-terminus, the 463-residue chain is 23S rRNA (uracil(1939)-C(5))-methyltransferase RlmD (463 aa).

Residues 14–78 (AVAPGSDPVV…PSYEQAHLLE (65 aa)) enclose the TRAM domain. Residues Cys91, Cys97, Cys100, and Cys179 each contribute to the [4Fe-4S] cluster site. S-adenosyl-L-methionine is bound by residues Gln287, Phe316, Asn321, Glu337, Asn365, and Asp386. Cys419 (nucleophile) is an active-site residue.

It belongs to the class I-like SAM-binding methyltransferase superfamily. RNA M5U methyltransferase family. RlmD subfamily.

It carries out the reaction uridine(1939) in 23S rRNA + S-adenosyl-L-methionine = 5-methyluridine(1939) in 23S rRNA + S-adenosyl-L-homocysteine + H(+). In terms of biological role, catalyzes the formation of 5-methyl-uridine at position 1939 (m5U1939) in 23S rRNA. The protein is 23S rRNA (uracil(1939)-C(5))-methyltransferase RlmD of Cupriavidus pinatubonensis (strain JMP 134 / LMG 1197) (Cupriavidus necator (strain JMP 134)).